The primary structure comprises 264 residues: Thymidylate synthase (264 aa).

Arginine 21 contributes to the dUMP binding site. Histidine 51 contacts (6R)-5,10-methylene-5,6,7,8-tetrahydrofolate. A dUMP-binding site is contributed by 126-127 (RR). Cysteine 146 (nucleophile) is an active-site residue. DUMP contacts are provided by residues 166–169 (RSAD), asparagine 177, and 207–209 (HIY). Residue aspartate 169 participates in (6R)-5,10-methylene-5,6,7,8-tetrahydrofolate binding. Serine 263 provides a ligand contact to (6R)-5,10-methylene-5,6,7,8-tetrahydrofolate.

This sequence belongs to the thymidylate synthase family. Bacterial-type ThyA subfamily. Homodimer.

The protein resides in the cytoplasm. The enzyme catalyses dUMP + (6R)-5,10-methylene-5,6,7,8-tetrahydrofolate = 7,8-dihydrofolate + dTMP. It functions in the pathway pyrimidine metabolism; dTTP biosynthesis. Functionally, catalyzes the reductive methylation of 2'-deoxyuridine-5'-monophosphate (dUMP) to 2'-deoxythymidine-5'-monophosphate (dTMP) while utilizing 5,10-methylenetetrahydrofolate (mTHF) as the methyl donor and reductant in the reaction, yielding dihydrofolate (DHF) as a by-product. This enzymatic reaction provides an intracellular de novo source of dTMP, an essential precursor for DNA biosynthesis. This is Thymidylate synthase from Bacillus pumilus (strain SAFR-032).